The primary structure comprises 198 residues: Probable nicotinate-nucleotide adenylyltransferase (198 aa).

Belongs to the NadD family.

It catalyses the reaction nicotinate beta-D-ribonucleotide + ATP + H(+) = deamido-NAD(+) + diphosphate. It functions in the pathway cofactor biosynthesis; NAD(+) biosynthesis; deamido-NAD(+) from nicotinate D-ribonucleotide: step 1/1. In terms of biological role, catalyzes the reversible adenylation of nicotinate mononucleotide (NaMN) to nicotinic acid adenine dinucleotide (NaAD). The polypeptide is Probable nicotinate-nucleotide adenylyltransferase (Herpetosiphon aurantiacus (strain ATCC 23779 / DSM 785 / 114-95)).